Consider the following 771-residue polypeptide: MGWLTRIVCLFWGVLLTARANYQNGKNNVPRLKLSYKEMLESNNVITFNGLANSSSYHTFLLDEERSRLYVGAKDHIFSFDLVNIKDFQKIVWPVSYTRRDECKWAGKDILKECANFIKVLKAYNQTHLYACGTGAFHPICTYIEIGHHPEDNIFKLENSHFENGRGKSPYDPKLLTASLLIDGELYSGTAADFMGRDFAIFRTLGHHHPIRTEQHDSRWLNDPKFISAHLISESDNPEDDKVYFFFRENAIDGEHSGKATHARIGQICKNDFGGHRSLVNKWTTFLKARLICSVPGPNGIDTHFDELQDVFLMNFKDPKNPVVYGVFTTSSNIFKGSAVCMYSMSDVRRVFLGPYAHRDGPNYQWVPYQGRVPYPRPGTCPSKTFGGFDSTKDLPDDVITFARSHPAMYNPVFPMNNRPIVIKTDVNYQFTQIVVDRVDAEDGQYDVMFIGTDVGTVLKVVSIPKETWYDLEEVLLEEMTVFREPTAISAMELSTKQQQLYIGSTAGVAQLPLHRCDIYGKACAECCLARDPYCAWDGSACSRYFPTAKRRTRRQDIRNGDPLTHCSDLHHDNHHGHSPEERIIYGVENSSTFLECSPKSQRALVYWQFQRRNEERKEEIRVDDHIIRTDQGLLLRSLQQKDSGNYLCHAVEHGFIQTLLKVTLEVIDTEHLEELLHKDDDGDGSKTKEMSNSMTPSQKVWYRDFMQLINHPNLNTMDEFCEQVWKRDRKQRRQRPGHTPGNSNKWKHLQENKKGRNRRTHEFERAPRSV.

The signal sequence occupies residues 1–20 (MGWLTRIVCLFWGVLLTARA). One can recognise a Sema domain in the interval 31–514 (RLKLSYKEML…STAGVAQLPL (484 aa)). Asparagine 53 carries an N-linked (GlcNAc...) asparagine glycan. Residues cysteine 103 and cysteine 114 are joined by a disulfide bond. Asparagine 125 carries an N-linked (GlcNAc...) asparagine glycan. 4 disulfides stabilise this stretch: cysteine 132–cysteine 141, cysteine 269–cysteine 381, cysteine 293–cysteine 341, and cysteine 517–cysteine 535. The region spanning 580–664 (PEERIIYGVE…GFIQTLLKVT (85 aa)) is the Ig-like C2-type domain. A glycan (N-linked (GlcNAc...) asparagine) is linked at asparagine 590. Cysteine 649 and cysteine 722 are oxidised to a cystine. A compositionally biased stretch (basic residues) spans 728–737 (RDRKQRRQRP). The disordered stretch occupies residues 728–771 (RDRKQRRQRPGHTPGNSNKWKHLQENKKGRNRRTHEFERAPRSV). Over residues 749 to 771 (HLQENKKGRNRRTHEFERAPRSV) the composition is skewed to basic and acidic residues.

This sequence belongs to the semaphorin family. As to quaternary structure, interacts with PLXND1. As to expression, expressed in the dorsal root ganglia.

The protein resides in the secreted. In terms of biological role, involved in the development of the olfactory system and in neuronal control of puberty. Induces the collapse and paralysis of neuronal growth cones. Could serve as a ligand that guides specific growth cones by a motility-inhibiting mechanism. Binds to the complex neuropilin-1/plexin-1. This is Semaphorin-3A (SEMA3A) from Homo sapiens (Human).